Reading from the N-terminus, the 852-residue chain is Bifunctional heparan sulfate N-deacetylase/N-sulfotransferase 1 (852 aa).

Residues 1 to 13 lie on the Cytoplasmic side of the membrane; that stretch reads MIITPYLNRKITR. A helical; Signal-anchor for type II membrane protein membrane pass occupies residues 14–34; that stretch reads PLKWILALIFLYLIYICLFSN. The tract at residues 34–574 is heparan sulfate N-deacetylase 1; sequence NNSKPPKPRK…PRHHAILPPS (541 aa). The Lumenal portion of the chain corresponds to 35-852; it reads NSKPPKPRKK…WLEESVRIRA (818 aa). N-linked (GlcNAc...) asparagine glycans are attached at residues N50, N72, N261, N328, N377, N428, and N576. The heparan sulfate N-sulfotransferase 1 stretch occupies residues 575-852; that stretch reads INCTKKSLPD…WLEESVRIRA (278 aa). The For sulfotransferase activity role is filled by K592. 592-596 provides a ligand contact to 3'-phosphoadenylyl sulfate; it reads KTGST. N607 carries N-linked (GlcNAc...) asparagine glycosylation. A 3'-phosphoadenylyl sulfate-binding site is contributed by S686. The N-linked (GlcNAc...) asparagine glycan is linked to N712. An intrachain disulfide couples C789 to C798. Position 803 to 807 (803 to 807) interacts with 3'-phosphoadenylyl sulfate; the sequence is KGRKY.

This sequence belongs to the sulfotransferase 1 family. NDST subfamily. As to quaternary structure, monomer. In terms of tissue distribution, present in some specific neurons in head and tail regions and muscles.

It is found in the golgi apparatus membrane. It carries out the reaction alpha-D-glucosaminyl-[heparan sulfate](n) + 3'-phosphoadenylyl sulfate = N-sulfo-alpha-D-glucosaminyl-[heparan sulfate](n) + adenosine 3',5'-bisphosphate + 2 H(+). The protein operates within glycan metabolism; heparan sulfate biosynthesis. Its pathway is glycan metabolism; heparin biosynthesis. In terms of biological role, essential bifunctional enzyme that catalyzes both the N-deacetylation and the N-sulfation of glucosamine (GlcNAc) of the glycosaminoglycan in heparan sulfate. Modifies the GlcNAc-GlcA disaccharide repeating sugar backbone to make N-sulfated heparosan, a prerequisite substrate for later modifications in heparin biosynthesis. The chain is Bifunctional heparan sulfate N-deacetylase/N-sulfotransferase 1 (hst-1) from Caenorhabditis elegans.